The following is a 115-amino-acid chain: Large ribosomal subunit protein bL19 (115 aa).

It belongs to the bacterial ribosomal protein bL19 family.

This protein is located at the 30S-50S ribosomal subunit interface and may play a role in the structure and function of the aminoacyl-tRNA binding site. The sequence is that of Large ribosomal subunit protein bL19 from Buchnera aphidicola subsp. Cinara cedri (strain Cc).